The chain runs to 105 residues: Guanidinium exporter (105 aa).

Met1 is a topological domain (cytoplasmic). Residues 2–19 (SWIVLLIAGLLEVVWAIG) form a helical membrane-spanning segment. Residues 20-28 (LKYTHGFTR) lie on the Periplasmic side of the membrane. The chain crosses the membrane as a helical span at residues 29-48 (LTPSIITIAAMIVSIAMLSW). At 49–54 (AMRTLP) the chain is on the cytoplasmic side. The helical transmembrane segment at 55 to 77 (VGTAYAVWTGIGAVGAAITGILL) threads the bilayer. The Periplasmic segment spans residues 78 to 86 (LGESASPAR). Residues 87 to 104 (LLSLGLIVAGIIGLKLST) traverse the membrane as a helical segment. Residue His105 is a topological domain, cytoplasmic.

It belongs to the drug/metabolite transporter (DMT) superfamily. Small multidrug resistance (SMR) (TC 2.A.7.1) family. Gdx/SugE subfamily.

It is found in the cell inner membrane. Its function is as follows. Guanidinium ion exporter. Couples guanidinium export to the proton motive force, exchanging one guanidinium ion for two protons. In Citrobacter freundii, this protein is Guanidinium exporter.